The following is an 82-amino-acid chain: ATP synthase subunit c (82 aa).

The next 2 membrane-spanning stretches (helical) occupy residues Leu-7–Ile-27 and Phe-53–Phe-73.

It belongs to the ATPase C chain family. As to quaternary structure, F-type ATPases have 2 components, F(1) - the catalytic core - and F(0) - the membrane proton channel. F(1) has five subunits: alpha(3), beta(3), gamma(1), delta(1), epsilon(1). F(0) has three main subunits: a(1), b(2) and c(10-14). The alpha and beta chains form an alternating ring which encloses part of the gamma chain. F(1) is attached to F(0) by a central stalk formed by the gamma and epsilon chains, while a peripheral stalk is formed by the delta and b chains.

It is found in the cell inner membrane. Functionally, f(1)F(0) ATP synthase produces ATP from ADP in the presence of a proton or sodium gradient. F-type ATPases consist of two structural domains, F(1) containing the extramembraneous catalytic core and F(0) containing the membrane proton channel, linked together by a central stalk and a peripheral stalk. During catalysis, ATP synthesis in the catalytic domain of F(1) is coupled via a rotary mechanism of the central stalk subunits to proton translocation. Its function is as follows. Key component of the F(0) channel; it plays a direct role in translocation across the membrane. A homomeric c-ring of between 10-14 subunits forms the central stalk rotor element with the F(1) delta and epsilon subunits. The polypeptide is ATP synthase subunit c (Acidovorax ebreus (strain TPSY) (Diaphorobacter sp. (strain TPSY))).